The chain runs to 90 residues: Conotoxin Rg9.1 (90 aa).

The signal sequence occupies residues 1 to 20 (MHLSLARSAVLILLLLFALG). Residues 21-60 (NFVGVQPGQITRDADHGINLRSLRKQMSRSPLVKGAFCGQ) constitute a propeptide that is removed on maturation. 3 disulfide bridges follow: Cys58–Cys71, Cys62–Cys73, and Cys67–Cys80.

This sequence belongs to the conotoxin P superfamily. In terms of tissue distribution, expressed by the venom duct.

The protein resides in the secreted. Its function is as follows. Probable neurotoxin that inhibits ion channels. In Conus regius (Crown cone), this protein is Conotoxin Rg9.1.